We begin with the raw amino-acid sequence, 368 residues long: ATP-dependent (S)-NAD(P)H-hydrate dehydratase (368 aa).

In terms of domain architecture, YjeF C-terminal spans 13 to 357 (LFKKVRKIVP…DEVHESFLEL (345 aa)). Residues glycine 125 and 178–184 (NVNEFSR) each bind (6S)-NADPHX. ATP contacts are provided by residues 231–235 (KGPHD) and 250–259 (GGLKRSGGQG). Aspartate 260 provides a ligand contact to (6S)-NADPHX.

It belongs to the NnrD/CARKD family. Mg(2+) is required as a cofactor.

It localises to the cytoplasm. The catalysed reaction is (6S)-NADHX + ATP = ADP + phosphate + NADH + H(+). It carries out the reaction (6S)-NADPHX + ATP = ADP + phosphate + NADPH + H(+). Catalyzes the dehydration of the S-form of NAD(P)HX at the expense of ATP, which is converted to ADP. Together with NAD(P)HX epimerase, which catalyzes the epimerization of the S- and R-forms, the enzyme allows the repair of both epimers of NAD(P)HX, a damaged form of NAD(P)H that is a result of enzymatic or heat-dependent hydration. The chain is ATP-dependent (S)-NAD(P)H-hydrate dehydratase from Aspergillus fumigatus (strain ATCC MYA-4609 / CBS 101355 / FGSC A1100 / Af293) (Neosartorya fumigata).